The sequence spans 395 residues: NAD(P)H-quinone oxidoreductase subunit H, chloroplastic (395 aa).

The protein belongs to the complex I 49 kDa subunit family. In terms of assembly, NDH is composed of at least 16 different subunits, 5 of which are encoded in the nucleus.

It is found in the plastid. The protein localises to the chloroplast thylakoid membrane. It catalyses the reaction a plastoquinone + NADH + (n+1) H(+)(in) = a plastoquinol + NAD(+) + n H(+)(out). The enzyme catalyses a plastoquinone + NADPH + (n+1) H(+)(in) = a plastoquinol + NADP(+) + n H(+)(out). Functionally, NDH shuttles electrons from NAD(P)H:plastoquinone, via FMN and iron-sulfur (Fe-S) centers, to quinones in the photosynthetic chain and possibly in a chloroplast respiratory chain. The immediate electron acceptor for the enzyme in this species is believed to be plastoquinone. Couples the redox reaction to proton translocation, and thus conserves the redox energy in a proton gradient. The chain is NAD(P)H-quinone oxidoreductase subunit H, chloroplastic from Staurastrum punctulatum (Green alga).